Here is a 491-residue protein sequence, read N- to C-terminus: Probable glycine dehydrogenase (decarboxylating) subunit 2 (491 aa).

Lysine 273 is subject to N6-(pyridoxal phosphate)lysine.

The protein belongs to the GcvP family. C-terminal subunit subfamily. The glycine cleavage system is composed of four proteins: P, T, L and H. In this organism, the P 'protein' is a heterodimer of two subunits. Pyridoxal 5'-phosphate is required as a cofactor.

It carries out the reaction N(6)-[(R)-lipoyl]-L-lysyl-[glycine-cleavage complex H protein] + glycine + H(+) = N(6)-[(R)-S(8)-aminomethyldihydrolipoyl]-L-lysyl-[glycine-cleavage complex H protein] + CO2. In terms of biological role, the glycine cleavage system catalyzes the degradation of glycine. The P protein binds the alpha-amino group of glycine through its pyridoxal phosphate cofactor; CO(2) is released and the remaining methylamine moiety is then transferred to the lipoamide cofactor of the H protein. The polypeptide is Probable glycine dehydrogenase (decarboxylating) subunit 2 (Bacillus cytotoxicus (strain DSM 22905 / CIP 110041 / 391-98 / NVH 391-98)).